The primary structure comprises 88 residues: Large ribosomal subunit protein eL31 (88 aa).

Belongs to the eukaryotic ribosomal protein eL31 family.

This Methanoregula boonei (strain DSM 21154 / JCM 14090 / 6A8) protein is Large ribosomal subunit protein eL31.